The primary structure comprises 417 residues: Serine hydroxymethyltransferase (417 aa).

(6S)-5,6,7,8-tetrahydrofolate-binding positions include L121 and 125-127; that span reads GHL. At K229 the chain carries N6-(pyridoxal phosphate)lysine. 355-357 contributes to the (6S)-5,6,7,8-tetrahydrofolate binding site; it reads SPF.

Belongs to the SHMT family. In terms of assembly, homodimer. It depends on pyridoxal 5'-phosphate as a cofactor.

It localises to the cytoplasm. It catalyses the reaction (6R)-5,10-methylene-5,6,7,8-tetrahydrofolate + glycine + H2O = (6S)-5,6,7,8-tetrahydrofolate + L-serine. The protein operates within one-carbon metabolism; tetrahydrofolate interconversion. It participates in amino-acid biosynthesis; glycine biosynthesis; glycine from L-serine: step 1/1. Functionally, catalyzes the reversible interconversion of serine and glycine with tetrahydrofolate (THF) serving as the one-carbon carrier. This reaction serves as the major source of one-carbon groups required for the biosynthesis of purines, thymidylate, methionine, and other important biomolecules. Also exhibits THF-independent aldolase activity toward beta-hydroxyamino acids, producing glycine and aldehydes, via a retro-aldol mechanism. The sequence is that of Serine hydroxymethyltransferase from Buchnera aphidicola subsp. Schizaphis graminum (strain Sg).